A 442-amino-acid polypeptide reads, in one-letter code: tRNA modification GTPase MnmE (442 aa).

(6S)-5-formyl-5,6,7,8-tetrahydrofolate-binding residues include Arg-22, Glu-79, and Lys-119. Residues 216–366 (GIKTCLVGAP…LLEKIKSIFA (151 aa)) form the TrmE-type G domain. Asn-226 is a K(+) binding site. Residues 226–231 (NSGKSS), 245–251 (SEIPGTT), and 270–273 (DTAG) each bind GTP. Residue Ser-230 coordinates Mg(2+). Ser-245, Ile-247, and Thr-250 together coordinate K(+). Position 251 (Thr-251) interacts with Mg(2+). Lys-442 is a binding site for (6S)-5-formyl-5,6,7,8-tetrahydrofolate.

It belongs to the TRAFAC class TrmE-Era-EngA-EngB-Septin-like GTPase superfamily. TrmE GTPase family. Homodimer. Heterotetramer of two MnmE and two MnmG subunits. K(+) is required as a cofactor.

The protein localises to the cytoplasm. Exhibits a very high intrinsic GTPase hydrolysis rate. Involved in the addition of a carboxymethylaminomethyl (cmnm) group at the wobble position (U34) of certain tRNAs, forming tRNA-cmnm(5)s(2)U34. This Mesomycoplasma hyopneumoniae (strain 232) (Mycoplasma hyopneumoniae) protein is tRNA modification GTPase MnmE.